The following is a 404-amino-acid chain: NADH-quinone oxidoreductase subunit D (404 aa).

The protein belongs to the complex I 49 kDa subunit family. As to quaternary structure, NDH-1 is composed of 14 different subunits. Subunits NuoB, C, D, E, F, and G constitute the peripheral sector of the complex.

It localises to the cell inner membrane. The catalysed reaction is a quinone + NADH + 5 H(+)(in) = a quinol + NAD(+) + 4 H(+)(out). NDH-1 shuttles electrons from NADH, via FMN and iron-sulfur (Fe-S) centers, to quinones in the respiratory chain. The immediate electron acceptor for the enzyme in this species is believed to be ubiquinone. Couples the redox reaction to proton translocation (for every two electrons transferred, four hydrogen ions are translocated across the cytoplasmic membrane), and thus conserves the redox energy in a proton gradient. The chain is NADH-quinone oxidoreductase subunit D from Dinoroseobacter shibae (strain DSM 16493 / NCIMB 14021 / DFL 12).